Reading from the N-terminus, the 95-residue chain is LSM complex subunit LSM2 (95 aa).

Positions 2–76 constitute a Sm domain; sequence LFFSFFKTLV…VRYVYLNKNM (75 aa).

This sequence belongs to the snRNP Sm proteins family. In terms of assembly, component of the heptameric LSM1-LSM7 complex that forms a seven-membered ring structure with a donut shape. The LSm subunits are arranged in the order LSM1, LSM2, LSM3, LSM6, LSM5, LSM7 and LSM4. Except for LSM1, where a C-terminal helix crosses the ring structure to form additional interactions with LSM3 and LSM6, each subunit interacts only with its two neighboring subunits. The LSM1-LSM7 complex interacts with PAT1; within the complex PAT1 has direct interactions with LSM2 and LSM3. The LSM1-LSM7 complex interacts with XRN1. Component of the heptameric LSM2-LSM8 complex that forms a seven-membered ring structure with a donut shape; an RNA strand can pass through the hole in the center of the ring structure. The LSm subunits are arranged in the order LSM8, LSM2, LSM3, LSM6, LSM5, LSM7 and LSM4. Interacts with U6 snRNA SNR6 and chaperone PRP24; to promote formation of the U4/U6-U5 tri-snRNP (small nuclear ribonucleoprotein) complex, the LSM2-LSM8 complex preferentially binds U6 snRNA that has been modified to contain a non-cyclic 3' phosphate. Component of the spliceosome U4/U6-U5 tri-snRNP complex composed of the U4, U6 and U5 snRNAs and at least PRP3, PRP4, PRP6, PRP8, PRP18, PRP31, PRP38, SNU13, SNU23, SNU66, SNU114, SPP381, SMB1, SMD1, SMD2, SMD3, SMX2, SMX3, LSM2, LSM3, LSM4, LSM5, LSM6, LSM7, LSM8, BRR2 and DIB1. May be found in a complex comprising LSM2-LSM7 without LSM1 or LSM8; the complex associates with pre-P RNA and snoRNA SNR5.

It is found in the nucleus. It localises to the nucleolus. Its subcellular location is the cytoplasm. Component of LSm protein complexes, which are involved in RNA processing and may function in a chaperone-like manner. Component of the cytoplasmic LSM1-LSM7 complex which is involved in mRNA degradation by activating the decapping step. Together with PAT1, the LSM1-LSM7 complex binds to osmotic stress-activated mRNAs to attenuate the osmotic stress response, probably by limiting ribosome access to the mRNA and consequently translation. Component of the nuclear LSM2-LSM8 complex, which is involved in spliceosome assembly. The LSM2-LSM8 complex plays a role in the biogenesis of the spliceosomal U4/U6-U5 tri-snRNP complex by accelerating PRP24-mediated annealing of U4/U6 di-snRNA. The LSM2-LSM8 complex binds U6 snRNA terminating with a non-cyclic 3' phosphate group. LSM2-LSM8 is probably also involved in degradation of nuclear pre-mRNA by targeting them for decapping. LSM2-LSM8 could be involved in processing of pre-tRNAs, pre-rRNAs and U3 snoRNA, although involvement may be indirect. In a complex that probably contains LSM2-LSM7, but not LSM1 or LSM8, associates with the precursor of the RNA component of RNase P (pre-P RNA) and may be involved in maturing pre-P RNA; the complex also associates with snoRNA SNR5. This Saccharomyces cerevisiae (strain ATCC 204508 / S288c) (Baker's yeast) protein is LSM complex subunit LSM2 (LSM2).